Here is a 418-residue protein sequence, read N- to C-terminus: NADH-quinone oxidoreductase subunit D (418 aa).

It belongs to the complex I 49 kDa subunit family. As to quaternary structure, NDH-1 is composed of 14 different subunits. Subunits NuoB, C, D, E, F, and G constitute the peripheral sector of the complex.

It is found in the cell inner membrane. It carries out the reaction a quinone + NADH + 5 H(+)(in) = a quinol + NAD(+) + 4 H(+)(out). NDH-1 shuttles electrons from NADH, via FMN and iron-sulfur (Fe-S) centers, to quinones in the respiratory chain. The immediate electron acceptor for the enzyme in this species is believed to be ubiquinone. Couples the redox reaction to proton translocation (for every two electrons transferred, four hydrogen ions are translocated across the cytoplasmic membrane), and thus conserves the redox energy in a proton gradient. This is NADH-quinone oxidoreductase subunit D from Neisseria gonorrhoeae (strain ATCC 700825 / FA 1090).